Here is a 513-residue protein sequence, read N- to C-terminus: MQLNSTEISDLIKQRIEKFNVVTEARNEGTIVSVSDGIINIHGLADVMQGEMIELPGGRYALALNLNRDSVGAVVMGPYADLQEGMKVTGTGRILEVPVGPELLGRVVNTLGEPIDGKGPIEAKLTSPVEVIAPGVIDRKSVDQPVQTGYKSVDSMIPIGRGQRELIIGDRQTGKTAMAIDAIINQKDSGIFSIYVAIGQKASTIANVVRKLEEHGALANTIVVVASASESAALQYLAPYSGCAMGEYFRDRGEDALIVYDDLSKQAVAYRQISLLLKRPPGREAFPGDVFYLHSRLLERAARVSEAYVERFTNGEVTGKTGSLTALPIIETQAGDVSAFVPTNVISITDGQIFLQTELFTAGVRPAVDPGISVSRVGGSAQTKIIKKLSGGIRTALAQYRELAAFAQFSSDLDDATKKQLDHGEKVTELMKQKQYAPMSVFDQALVIFAAEKGYLKDVELAKLADFEEALLSYARGQFADLAKEIDTSGAWNNEIEAQFVKLVEDFKATQTW.

Position 169–176 (169–176) interacts with ATP; it reads GDRQTGKT.

Belongs to the ATPase alpha/beta chains family. As to quaternary structure, F-type ATPases have 2 components, CF(1) - the catalytic core - and CF(0) - the membrane proton channel. CF(1) has five subunits: alpha(3), beta(3), gamma(1), delta(1), epsilon(1). CF(0) has three main subunits: a(1), b(2) and c(9-12). The alpha and beta chains form an alternating ring which encloses part of the gamma chain. CF(1) is attached to CF(0) by a central stalk formed by the gamma and epsilon chains, while a peripheral stalk is formed by the delta and b chains.

Its subcellular location is the cell inner membrane. The enzyme catalyses ATP + H2O + 4 H(+)(in) = ADP + phosphate + 5 H(+)(out). Its function is as follows. Produces ATP from ADP in the presence of a proton gradient across the membrane. The alpha chain is a regulatory subunit. This chain is ATP synthase subunit alpha, found in Aliivibrio fischeri (strain ATCC 700601 / ES114) (Vibrio fischeri).